The following is a 201-amino-acid chain: Imidazoleglycerol-phosphate dehydratase (201 aa).

It belongs to the imidazoleglycerol-phosphate dehydratase family.

The protein resides in the cytoplasm. It catalyses the reaction D-erythro-1-(imidazol-4-yl)glycerol 3-phosphate = 3-(imidazol-4-yl)-2-oxopropyl phosphate + H2O. The protein operates within amino-acid biosynthesis; L-histidine biosynthesis; L-histidine from 5-phospho-alpha-D-ribose 1-diphosphate: step 6/9. This chain is Imidazoleglycerol-phosphate dehydratase, found in Synechococcus sp. (strain CC9311).